The primary structure comprises 131 residues: Small ribosomal subunit protein uS8 (131 aa).

This sequence belongs to the universal ribosomal protein uS8 family. In terms of assembly, part of the 30S ribosomal subunit. Contacts proteins S5 and S12.

Functionally, one of the primary rRNA binding proteins, it binds directly to 16S rRNA central domain where it helps coordinate assembly of the platform of the 30S subunit. This Pelodictyon phaeoclathratiforme (strain DSM 5477 / BU-1) protein is Small ribosomal subunit protein uS8.